The chain runs to 72 residues: DNA-directed RNA polymerase subunit epsilon (72 aa).

The protein belongs to the RNA polymerase subunit epsilon family. In terms of assembly, RNAP is composed of a core of 2 alpha, a beta and a beta' subunit. The core is associated with a delta subunit, and at least one of epsilon or omega. When a sigma factor is associated with the core the holoenzyme is formed, which can initiate transcription.

The enzyme catalyses RNA(n) + a ribonucleoside 5'-triphosphate = RNA(n+1) + diphosphate. Functionally, a non-essential component of RNA polymerase (RNAP). In Staphylococcus aureus (strain JH1), this protein is DNA-directed RNA polymerase subunit epsilon.